The chain runs to 118 residues: DNA-binding protein YG5714_1868 (118 aa).

Belongs to the PDCD5 family.

The chain is DNA-binding protein YG5714_1868 from Saccharolobus islandicus (strain Y.G.57.14 / Yellowstone #1) (Sulfolobus islandicus).